The following is a 322-amino-acid chain: Ferrochelatase (322 aa).

Positions 194 and 275 each coordinate Fe cation.

The protein belongs to the ferrochelatase family.

It is found in the cytoplasm. The enzyme catalyses heme b + 2 H(+) = protoporphyrin IX + Fe(2+). Its pathway is porphyrin-containing compound metabolism; protoheme biosynthesis; protoheme from protoporphyrin-IX: step 1/1. Functionally, catalyzes the ferrous insertion into protoporphyrin IX. This chain is Ferrochelatase, found in Proteus mirabilis (strain HI4320).